A 672-amino-acid chain; its full sequence is Glycogen [starch] synthase (672 aa).

Residue Lys-56 participates in UDP-alpha-D-glucose binding. Residues 645–672 (MRDNEGKVPSAATSRRPSIHSSDGEDDE) are disordered. The span at 655-665 (AATSRRPSIHS) shows a compositional bias: polar residues.

Belongs to the glycosyltransferase 3 family. As to quaternary structure, forms a hetero-octamer with each protomer of the gsy-1 homotetramer bound to one molecule of gyg-1. The N-terminus is involved in interprotomer contacts with gyg-1. The interaction with gyg-1 is required for glycogen production but is not required for gsy-1 intrinsic activity.

The enzyme catalyses [(1-&gt;4)-alpha-D-glucosyl](n) + UDP-alpha-D-glucose = [(1-&gt;4)-alpha-D-glucosyl](n+1) + UDP + H(+). It functions in the pathway glycan biosynthesis; glycogen biosynthesis. Transfers the glycosyl residue from UDP-Glc to the non-reducing end of alpha-1,4-glucan. The protein is Glycogen [starch] synthase of Caenorhabditis elegans.